Here is a 232-residue protein sequence, read N- to C-terminus: Sugar fermentation stimulation protein homolog (232 aa).

The protein belongs to the SfsA family.

The polypeptide is Sugar fermentation stimulation protein homolog (Ruegeria sp. (strain TM1040) (Silicibacter sp.)).